The sequence spans 248 residues: Probable transcriptional regulatory protein AZC_0510 (248 aa).

Belongs to the TACO1 family.

The protein resides in the cytoplasm. The chain is Probable transcriptional regulatory protein AZC_0510 from Azorhizobium caulinodans (strain ATCC 43989 / DSM 5975 / JCM 20966 / LMG 6465 / NBRC 14845 / NCIMB 13405 / ORS 571).